The chain runs to 302 residues: MLGKARELANYQDEPEQLPTGSFGKNAFLRLGFERRPERTVLATLHRRAPLIVQQALYWDEGMPTLPCVSIISNAGGILQGDRYAIEIDLEPDTQAHVTTQSATRIQEMDANFATQTQTITLGANSYLEYIPHPIIPHKHSRFVQQTEVTIHPTATLIYSEVLMAGRKYYGTGELFHYDLFSSKFHAAHTDGTSLFTEKFIVEPARGNVSRLGAMGSFHVFGNLILLTPKTHADRLFETIDPVFDMDEGIAWGASRLPNDAGLLFKVLGMESAPVRAAIRKIWEAARQEVTGASLPENFLWA.

The protein belongs to the UreD family. In terms of assembly, ureD, UreF and UreG form a complex that acts as a GTP-hydrolysis-dependent molecular chaperone, activating the urease apoprotein by helping to assemble the nickel containing metallocenter of UreC. The UreE protein probably delivers the nickel.

The protein resides in the cytoplasm. Functionally, required for maturation of urease via the functional incorporation of the urease nickel metallocenter. This Brucella melitensis biotype 1 (strain ATCC 23456 / CCUG 17765 / NCTC 10094 / 16M) protein is Urease accessory protein UreD 2.